Here is a 1150-residue protein sequence, read N- to C-terminus: GPI inositol-deacylase (1150 aa).

The tract at residues 1-43 is disordered; it reads MQGRPNGASGDPNPRNDTSVTIDSDSDNGSRHRIAEVRGSSPS. N-linked (GlcNAc...) asparagine glycans are attached at residues Asn16 and Asn28. The helical transmembrane segment at 122 to 142 threads the bilayer; that stretch reads ICSGLVLFVTVSALLILSIIV. The active site involves Ser309. A helical transmembrane segment spans residues 790 to 810; it reads LAMRYRTVFAAFPLLVVSLVL. An N-linked (GlcNAc...) asparagine glycan is attached at Asn818. Residues 829–849 traverse the membrane as a helical segment; sequence ALDLCIRSSIPLLFLGLTFLA. Residue Asn870 is glycosylated (N-linked (GlcNAc...) asparagine). A helical transmembrane segment spans residues 890-910; that stretch reads AFFWFLVPLFGIISIGTCVIV. Asn942 is a glycosylation site (N-linked (GlcNAc...) asparagine). The next 5 membrane-spanning stretches (helical) occupy residues 960–980, 1010–1030, 1047–1067, 1079–1099, and 1102–1122; these read VLLL…VACV, SIFI…IVWI, VFSI…TMIP, VLFF…AYLL, and ITNL…GFSL. Asn1124 and Asn1130 each carry an N-linked (GlcNAc...) asparagine glycan.

It belongs to the GPI inositol-deacylase family.

Its subcellular location is the endoplasmic reticulum membrane. Involved in inositol deacylation of GPI-anchored proteins which plays important roles in the quality control and ER-associated degradation of GPI-anchored proteins. In Coccidioides immitis (strain RS) (Valley fever fungus), this protein is GPI inositol-deacylase (BST1).